We begin with the raw amino-acid sequence, 455 residues long: ATP-dependent protease ATPase subunit HslU (455 aa).

ATP-binding positions include Ile19, Gly61–Glu66, Asp268, Glu333, and Arg405.

It belongs to the ClpX chaperone family. HslU subfamily. In terms of assembly, a double ring-shaped homohexamer of HslV is capped on each side by a ring-shaped HslU homohexamer. The assembly of the HslU/HslV complex is dependent on binding of ATP.

Its subcellular location is the cytoplasm. ATPase subunit of a proteasome-like degradation complex; this subunit has chaperone activity. The binding of ATP and its subsequent hydrolysis by HslU are essential for unfolding of protein substrates subsequently hydrolyzed by HslV. HslU recognizes the N-terminal part of its protein substrates and unfolds these before they are guided to HslV for hydrolysis. This chain is ATP-dependent protease ATPase subunit HslU, found in Francisella philomiragia subsp. philomiragia (strain ATCC 25017 / CCUG 19701 / FSC 153 / O#319-036).